A 201-amino-acid polypeptide reads, in one-letter code: 3-isopropylmalate dehydratase small subunit (201 aa).

The protein belongs to the LeuD family. LeuD type 1 subfamily. In terms of assembly, heterodimer of LeuC and LeuD.

The enzyme catalyses (2R,3S)-3-isopropylmalate = (2S)-2-isopropylmalate. Its pathway is amino-acid biosynthesis; L-leucine biosynthesis; L-leucine from 3-methyl-2-oxobutanoate: step 2/4. Its function is as follows. Catalyzes the isomerization between 2-isopropylmalate and 3-isopropylmalate, via the formation of 2-isopropylmaleate. This Shewanella oneidensis (strain ATCC 700550 / JCM 31522 / CIP 106686 / LMG 19005 / NCIMB 14063 / MR-1) protein is 3-isopropylmalate dehydratase small subunit.